The primary structure comprises 233 residues: Small ribosomal subunit protein uS3 (233 aa).

The KH type-2 domain maps to 39–107; sequence IRAFLKRKLY…DVNINIKEER (69 aa). The segment covering 212–222 has biased composition (basic and acidic residues); that stretch reads MQPEKTEESAP. A disordered region spans residues 212-233; the sequence is MQPEKTEESAPAKKPRRTRRGK. Residues 224-233 are compositionally biased toward basic residues; sequence KKPRRTRRGK.

Belongs to the universal ribosomal protein uS3 family. In terms of assembly, part of the 30S ribosomal subunit. Forms a tight complex with proteins S10 and S14.

Functionally, binds the lower part of the 30S subunit head. Binds mRNA in the 70S ribosome, positioning it for translation. This Campylobacter jejuni subsp. jejuni serotype O:6 (strain 81116 / NCTC 11828) protein is Small ribosomal subunit protein uS3.